A 79-amino-acid polypeptide reads, in one-letter code: uncharacterized protein (79 aa).

Residues 1-33 (MRFIIRTVMLIALVWIGLLLSGYGVLIGSKENA) form the signal peptide.

This is an uncharacterized protein from Escherichia coli O6:K15:H31 (strain 536 / UPEC).